The following is a 335-amino-acid chain: Probable cytosolic iron-sulfur protein assembly protein Ciao1 (335 aa).

7 WD repeats span residues 12–51 (GHKGRIWGVAWHPKGNVFASCGEDKAIRIWSLNGNTWTTK), 57–96 (GHKRTIREIRWSPCGQYLASASFDGTTAIWSKSSGEFECN), 101–140 (GHENEVKSVSWSRSGGLLATCSRDKSVWIWEVAGDDEFEC), 146–185 (PHTQDVKRVVWHPTKELLASASYDNTIKMFAEDALDSDWD), 192–231 (SHTSTVWSIDFDATGERLVSCSDDTSLKIWQAYHPGNDAG), 250–289 (QHSRAIYDVSWCKLTNLIATACGDDGIRIFKETSDSKRDE), and 301–335 (AHDQDVNSVEWNPVVEGQLISCSDDGTIKVWKMTE).

Belongs to the WD repeat CIA1 family.

Its function is as follows. Essential component of the cytosolic iron-sulfur (Fe/S) protein assembly machinery. Required for the maturation of extramitochondrial Fe/S proteins. The polypeptide is Probable cytosolic iron-sulfur protein assembly protein Ciao1 (Drosophila ananassae (Fruit fly)).